Reading from the N-terminus, the 332-residue chain is Aquaporin-7-2 (332 aa).

The span at 1–40 (MSGQHQITEQPSGNPLSRTSTLIQEKPLTPTSSHAGTQKQ) shows a compositional bias: polar residues. Positions 1 to 46 (MSGQHQITEQPSGNPLSRTSTLIQEKPLTPTSSHAGTQKQPEAPRQ) are disordered. At 1–66 (MSGQHQITEQ…RHAIRKPMAE (66 aa)) the chain is on the cytoplasmic side. The helical transmembrane segment at 67–87 (FFGVALLIIFGAGSACQVVLS) threads the bilayer. The Extracellular segment spans residues 88–100 (TNPDVASSARGSF). Residues 101 to 121 (LSINFGWAIGIAMGVWVSGGI) traverse the membrane as a helical segment. Topologically, residues 122–144 (SGGHINPAITIAMATYRGFPWCK) are cytoplasmic. Residues 127-129 (NPA) carry the NPA 1 motif. The chain crosses the membrane as a helical span at residues 145–165 (VPSYILAQVLGGVVGAALVYA). Residues 166-199 (NYIHAIDVFEGGHHIRTEATASLFATYALPYMTQ) lie on the Extracellular side of the membrane. A helical membrane pass occupies residues 200–220 (ASCFFSEFLATAVLSMMVFAL). Topologically, residues 221–230 (TDKRNHSPTN) are cytoplasmic. The chain crosses the membrane as a helical span at residues 231-251 (GLLPFALFILFVGLGASLGME). At 252–283 (TAYALNPARDFGPRLFLAMAGYGKALFNYRSQ) the chain is on the extracellular side. The short motif at 257–259 (NPA) is the NPA 2 element. A helical transmembrane segment spans residues 284 to 304 (YWLWAPIIAPVLGAQAGGLLY). At 305-332 (DTFLNDGDNSPIKWRCASSQEQQLAEVV) the chain is on the cytoplasmic side.

It belongs to the MIP/aquaporin (TC 1.A.8) family.

The protein resides in the membrane. The enzyme catalyses H2O(in) = H2O(out). Water channel required to facilitate the transport of water across membranes. Does not mediate the transport carbon dioxide across the membrane. The protein is Aquaporin-7-2 of Laccaria bicolor (Bicoloured deceiver).